A 94-amino-acid chain; its full sequence is MKFIKETKEGVLIMIYVQPKAKKNAIEGVDGWRGRLKVRIAAPPVEGKANKEVVKFFSKLLGAEVNIVRGETSREKDLLVKGLSVEEVRKKLGV.

The protein belongs to the UPF0235 family.

The polypeptide is UPF0235 protein TK0768 (Thermococcus kodakarensis (strain ATCC BAA-918 / JCM 12380 / KOD1) (Pyrococcus kodakaraensis (strain KOD1))).